The chain runs to 474 residues: Cobyric acid synthase (474 aa).

Positions 251–431 constitute a GATase cobBQ-type domain; that stretch reads TGFVAIPRLP…LHGLLENSAY (181 aa). The active-site Nucleophile is the cysteine 328. Histidine 423 is an active-site residue.

This sequence belongs to the CobB/CobQ family. CobQ subfamily.

It functions in the pathway cofactor biosynthesis; adenosylcobalamin biosynthesis. Its function is as follows. Catalyzes amidations at positions B, D, E, and G on adenosylcobyrinic A,C-diamide. NH(2) groups are provided by glutamine, and one molecule of ATP is hydrogenolyzed for each amidation. The sequence is that of Cobyric acid synthase from Deinococcus radiodurans (strain ATCC 13939 / DSM 20539 / JCM 16871 / CCUG 27074 / LMG 4051 / NBRC 15346 / NCIMB 9279 / VKM B-1422 / R1).